Consider the following 65-residue polypeptide: Sodium channel alpha-toxin Acra4 (65 aa).

Positions 2 to 63 constitute an LCN-type CS-alpha/beta domain; it reads RDGYIVDDKN…PIKDPSYKCH (62 aa). 4 disulfides stabilise this stretch: Cys12-Cys62, Cys16-Cys34, Cys20-Cys44, and Cys24-Cys46. Position 65 (Arg65) is a propeptide, removed by a carboxypeptidase.

It belongs to the long (4 C-C) scorpion toxin superfamily. Sodium channel inhibitor family. Alpha subfamily. As to expression, expressed by the venom gland.

It is found in the secreted. Its function is as follows. Alpha toxins bind voltage-independently at site-3 of sodium channels (Nav) and inhibit the inactivation of the activated channels, thereby blocking neuronal transmission. Electrophysiological studies of this were performed using sodium-channels expressed in F11 cell culture, by patch-clamp recordings. Affinity of this toxin toward sodium channels in F11 cell line is in the order of 1 uM concentration. The protein is Sodium channel alpha-toxin Acra4 of Androctonus crassicauda (Arabian fat-tailed scorpion).